Reading from the N-terminus, the 120-residue chain is Autophagy-related protein 8C (120 aa).

The tract at residues 1-20 (MARSSFKLEHPLERRQAEAN) is disordered. A lipid anchor (Phosphatidylethanolamine amidated glycine) is attached at Gly-117. Positions 118 to 120 (LFV) are cleaved as a propeptide — removed in mature form.

The protein belongs to the ATG8 family. Interacts with ATG4. In terms of processing, the C-terminal 3 residues are removed by ATG4 to expose Gly-117 at the C-terminus. The C-terminal Gly is then amidated with phosphatidylethanolamine by an activating system similar to that for ubiquitin.

It is found in the cytoplasmic vesicle. The protein resides in the autophagosome membrane. Its subcellular location is the vacuole membrane. The protein localises to the cytoplasm. It localises to the cytoskeleton. In terms of biological role, ubiquitin-like modifier involved in autophagosomes formation. May mediate the delivery of the autophagosomes to the vacuole via the microtubule cytoskeleton. The sequence is that of Autophagy-related protein 8C (ATG8C) from Oryza sativa subsp. indica (Rice).